A 364-amino-acid chain; its full sequence is Peptidyl-prolyl cis-trans isomerase D (364 aa).

Residues 7-170 (YFDITIGNKP…EDAVIAKCGE (164 aa)) enclose the PPIase cyclophilin-type domain. 3 TPR repeats span residues 208–241 (ATHL…LNEK), 261–294 (IPCY…DSKY), and 301–334 (TKAY…DPED).

This sequence belongs to the cyclophilin-type PPIase family. PPIase D subfamily.

It is found in the cytoplasm. The enzyme catalyses [protein]-peptidylproline (omega=180) = [protein]-peptidylproline (omega=0). Functionally, PPIases accelerate the folding of proteins. It catalyzes the cis-trans isomerization of proline imidic peptide bonds in oligopeptides. This Rhizopus delemar (strain RA 99-880 / ATCC MYA-4621 / FGSC 9543 / NRRL 43880) (Mucormycosis agent) protein is Peptidyl-prolyl cis-trans isomerase D (cyp12).